The chain runs to 116 residues: Regulator of ribonuclease activity B (116 aa).

It belongs to the RraB family. Interacts with the C-terminal region of Rne.

The protein localises to the cytoplasm. Its function is as follows. Globally modulates RNA abundance by binding to RNase E (Rne) and regulating its endonucleolytic activity. Can modulate Rne action in a substrate-dependent manner by altering the composition of the degradosome. In Colwellia psychrerythraea (strain 34H / ATCC BAA-681) (Vibrio psychroerythus), this protein is Regulator of ribonuclease activity B.